A 580-amino-acid chain; its full sequence is 2-succinyl-5-enolpyruvyl-6-hydroxy-3-cyclohexene-1-carboxylate synthase (580 aa).

It belongs to the TPP enzyme family. MenD subfamily. As to quaternary structure, homodimer. Mg(2+) is required as a cofactor. The cofactor is Mn(2+). Requires thiamine diphosphate as cofactor.

The enzyme catalyses isochorismate + 2-oxoglutarate + H(+) = 5-enolpyruvoyl-6-hydroxy-2-succinyl-cyclohex-3-ene-1-carboxylate + CO2. The protein operates within quinol/quinone metabolism; 1,4-dihydroxy-2-naphthoate biosynthesis; 1,4-dihydroxy-2-naphthoate from chorismate: step 2/7. It participates in quinol/quinone metabolism; menaquinone biosynthesis. Catalyzes the thiamine diphosphate-dependent decarboxylation of 2-oxoglutarate and the subsequent addition of the resulting succinic semialdehyde-thiamine pyrophosphate anion to isochorismate to yield 2-succinyl-5-enolpyruvyl-6-hydroxy-3-cyclohexene-1-carboxylate (SEPHCHC). This Listeria innocua serovar 6a (strain ATCC BAA-680 / CLIP 11262) protein is 2-succinyl-5-enolpyruvyl-6-hydroxy-3-cyclohexene-1-carboxylate synthase.